The sequence spans 140 residues: Pro-vaccinia growth factor (140 aa).

A signal peptide spans 1–18 (MSMKYLMLLFAAMIIRSF). At 19-100 (ADSGNAIETT…SENPNTTTSY (82 aa)) the chain is on the extracellular side. Residue Asn34 is glycosylated (N-linked (GlcNAc...) asparagine; by host). In terms of domain architecture, EGF-like spans 41 to 81 (AIRLCGPEGDGYCLHGDCIHARDIDGMYCRCSHGYTGIRCQ). Disulfide bonds link Cys45/Cys58, Cys53/Cys69, and Cys71/Cys80. A glycan (N-linked (GlcNAc...) asparagine; by host) is linked at Asn95. A helical transmembrane segment spans residues 101–121 (IPSPGIVLVLVGIIIITCCSL). The Cytoplasmic portion of the chain corresponds to 122-140 (SVYRFTRRTKLPIQDMVVP).

This sequence belongs to the orthopoxvirus OPG019 family. Vaccinia growth factor interacts with host EGFR and promotes EGFR dimerization.

It is found in the host membrane. It localises to the secreted. Stimulates cellular proliferation (hyperplasia)and mobility around infected cells to promote rapid and efficient spread of infection. This effect is beneficial for virus replication in vivo, because poxviruses replicate possibly better in proliferating cells than in quiescent cells. Acts by binding host EGFR, inducing its dimerization, autophosphorylation and leading to activation of several cellular pathways regulating cell proliferation or cell survival. The activation by host EGFR of mitogen activated protein kinases (MAPK) and extracellular-signal regulated kinases (ERK) are essential for the positive effect of vaccinia growth factor on poxvirus virulence in vivo. This chain is Pro-vaccinia growth factor (OPG019), found in Vaccinia virus (strain L-IVP) (VACV).